We begin with the raw amino-acid sequence, 527 residues long: Butyrophilin subfamily 2 member A1 (527 aa).

An N-terminal signal peptide occupies residues 1–28; it reads MESAAALHFSRPASLLLLLLSLCALVSA. Positions 29–141 constitute an Ig-like V-type domain; that stretch reads QFIVVGPTDP…SYDEAILHLV (113 aa). Over 29–248 the chain is Extracellular; sequence QFIVVGPTDP…SFMPSVSPCA (220 aa). Asparagine 46, asparagine 114, and asparagine 120 each carry an N-linked (GlcNAc...) asparagine glycan. A disulfide bridge links cysteine 51 with cysteine 125. Residues 249 to 269 traverse the membrane as a helical segment; sequence VALPIIVVILMIPIAVCIYWI. Over 270 to 527 the chain is Cytoplasmic; that stretch reads NKLQKEKKIL…LHRVGTHQSL (258 aa). Residues 310-506 form the B30.2/SPRY domain; it reads VKEKLQEELR…IFICPALTGA (197 aa).

The protein belongs to the immunoglobulin superfamily. BTN/MOG family. In terms of tissue distribution, highly expressed in brain, bone marrow, small intestine, muscle, spleen and pancreas. Moderate expression was seen in lung, liver and kidney.

It localises to the membrane. The chain is Butyrophilin subfamily 2 member A1 (BTN2A1) from Homo sapiens (Human).